The following is a 592-amino-acid chain: MSNADAPSRKFSSSIIGIDLGTTNSCVSVIKDGKPVIIENQEGERTTPSVVSILKDEVVVGTQARNRILMHPRNTIFASKRLIGRKFGDPEVEKYVKGLPFDTMSHCNGDVWIRVDGKKYSPAQIGAFVLSKLKSSAEAFLSHPVARSVITVPAYFNDSQRQATKDAGRIAGLDVVRVINEPTAAALAYGLDKSARGNIAVYDLGGGTFDISILEVEDGVFHVKATNGDTFLGGEDLDNEVVKFIVEDFKQKEGIDLSNDVDALGRIKEGAEKIKKELSVSCTSKMEIPYICNSQGGPKHLCREITRSEFEQIAKKIVERTIAPCKRALADAGLDSSDIKHVILVGGMTRMPYVRRVVKEIFGIEPSTDINPDEAVANGAALQGGVLMGEIDDVLLLDVAPLSLGIELLGGVFSRVIRRNTTIPFKETQVFSTSEDNQTEVDIKVYQGERSMVADNKYLGQIKLKSIPPLPRGVPRIEVTFESDANGIYRVTAQDSITKEPQSLEIIPSSGLTEAEVERMVEESERLRHLDEMKRRKAELIVSSSELLRRPPTELERIPKNYLDRLGKVVKGEDFDLKEMEEVLLSAKKSMS.

It belongs to the heat shock protein 70 family.

Its subcellular location is the nucleus. Functionally, may act as a chaperone. This is Mitochondrial-type heat shock protein 70 (HSP70) from Encephalitozoon cuniculi (strain GB-M1) (Microsporidian parasite).